Consider the following 342-residue polypeptide: tRNA N6-adenosine threonylcarbamoyltransferase (342 aa).

2 residues coordinate Fe cation: H114 and H118. Residues 136 to 140 (LVSGG), D169, G182, D186, and N275 contribute to the substrate site. D301 contributes to the Fe cation binding site.

The protein belongs to the KAE1 / TsaD family. Fe(2+) serves as cofactor.

It localises to the cytoplasm. The enzyme catalyses L-threonylcarbamoyladenylate + adenosine(37) in tRNA = N(6)-L-threonylcarbamoyladenosine(37) in tRNA + AMP + H(+). Functionally, required for the formation of a threonylcarbamoyl group on adenosine at position 37 (t(6)A37) in tRNAs that read codons beginning with adenine. Is involved in the transfer of the threonylcarbamoyl moiety of threonylcarbamoyl-AMP (TC-AMP) to the N6 group of A37, together with TsaE and TsaB. TsaD likely plays a direct catalytic role in this reaction. In Streptococcus pyogenes serotype M3 (strain ATCC BAA-595 / MGAS315), this protein is tRNA N6-adenosine threonylcarbamoyltransferase.